A 346-amino-acid polypeptide reads, in one-letter code: Glycerol-3-phosphate dehydrogenase [NAD(P)+] (346 aa).

Ser11, Trp12, His32, Arg33, and Lys106 together coordinate NADPH. Residues Lys106, Gly137, and Ser139 each contribute to the sn-glycerol 3-phosphate site. Ala141 is an NADPH binding site. Positions 193, 246, 256, 257, and 258 each coordinate sn-glycerol 3-phosphate. The active-site Proton acceptor is Lys193. Arg257 serves as a coordination point for NADPH. Val281 and Glu283 together coordinate NADPH.

This sequence belongs to the NAD-dependent glycerol-3-phosphate dehydrogenase family.

It localises to the cytoplasm. It carries out the reaction sn-glycerol 3-phosphate + NAD(+) = dihydroxyacetone phosphate + NADH + H(+). It catalyses the reaction sn-glycerol 3-phosphate + NADP(+) = dihydroxyacetone phosphate + NADPH + H(+). Its pathway is membrane lipid metabolism; glycerophospholipid metabolism. Catalyzes the reduction of the glycolytic intermediate dihydroxyacetone phosphate (DHAP) to sn-glycerol 3-phosphate (G3P), the key precursor for phospholipid synthesis. The protein is Glycerol-3-phosphate dehydrogenase [NAD(P)+] of Bacillus licheniformis (strain ATCC 14580 / DSM 13 / JCM 2505 / CCUG 7422 / NBRC 12200 / NCIMB 9375 / NCTC 10341 / NRRL NRS-1264 / Gibson 46).